The chain runs to 545 residues: Serine/threonine-protein kinase PAK 1 (545 aa).

A disordered region spans residues 1–77 (MSNNGLDIQD…KEKERPEISL (77 aa)). Position 2 is an N-acetylserine (Ser2). Position 21 is a phosphoserine; by PKB and autocatalysis (Ser21). The residue at position 57 (Ser57) is a Phosphoserine; by autocatalysis. Positions 68–77 (KEKERPEISL) are enriched in basic and acidic residues. The segment at 70–140 (KERPEISLPS…YNSKKTSNSQ (71 aa)) is autoregulatory region. In terms of domain architecture, CRIB spans 75-88 (ISLPSDFEHTIHVG). The segment at 75–105 (ISLPSDFEHTIHVGFDAVTGEFTGMPEQWAR) is GTPase-binding. Phosphothreonine; by OXSR1 is present on Thr84. Ser115 is modified (phosphoserine). Phosphotyrosine occurs at positions 131 and 142. The residue at position 144 (Ser144) is a Phosphoserine; by autocatalysis. Ser149 carries the phosphoserine modification. Tyr153 is subject to Phosphotyrosine; by JAK2. Residues 159-198 (LNVKAVSETPAVPPVSEDEDDDDDDATPPPVIAPRPEHTK) form a disordered region. Ser174 is subject to Phosphoserine. Over residues 174-184 (SEDEDDDDDDA) the composition is skewed to acidic residues. Residue Thr185 is modified to Phosphothreonine. Ser199 bears the Phosphoserine; by autocatalysis mark. At Tyr201 the chain carries Phosphotyrosine; by JAK2. Ser204 is modified (phosphoserine). Positions 211–251 (VTPTRDVATSPISPTENNTTPPDALTRNTEKQKKKPKMSDE) are disordered. A phosphothreonine mark is found at Thr212 and Thr219. Phosphoserine is present on residues Ser220 and Ser223. Over residues 220-231 (SPISPTENNTTP) the composition is skewed to polar residues. Phosphothreonine is present on residues Thr225, Thr229, and Thr230. The Protein kinase domain occupies 270–521 (YTRFEKIGQG…AKELLQHQFL (252 aa)). 276–284 (IGQGASGTV) serves as a coordination point for ATP. Tyr285 carries the phosphotyrosine; by JAK2 modification. ATP is bound by residues Lys299 and 345–347 (EYL). The Proton acceptor role is filled by Asp389. Residue Thr423 is modified to Phosphothreonine; by autocatalysis, BRSK2 and PDPK1.

The protein belongs to the protein kinase superfamily. STE Ser/Thr protein kinase family. STE20 subfamily. Homodimer; homodimerization results in autoinhibition. Active as monomer. Interacts with GIT1. Component of cytoplasmic complexes, which also contains PXN, ARHGEF7 and GIT1. Interacts with NISCH. Interacts with DVL1; mediates the formation of a DVL1, MUSK and PAK1 ternary complex involved in AChR clustering. Binds to the caspase-cleaved p110 isoform of CDC2L1 and CDC2L2, p110C, but not the full-length proteins. Interacts with ARHGEF7. Interacts tightly with GTP-bound but not GDP-bound CDC42/P21 and RAC1. Interacts with SCRIB. Interacts with PDPK1. Interacts (via kinase domain) with RAF1. Interacts with NCK1 and NCK2. Interacts with TBCB. Interacts with BRSK2. Interacts with SNAI1. Interacts with CIB1 isoform 2. Interacts with CIB1 (via N-terminal region); the interaction is direct, promotes PAK1 activity and occurs in a calcium-dependent manner. Interacts with INPP5K. Interacts with gamma-tubulin. Interacts with RHOU; the interaction promotes PAK1 activation. It depends on Mg(2+) as a cofactor. In terms of processing, autophosphorylated in trans, meaning that in a dimer, one kinase molecule phosphorylates the other one. Activated by autophosphorylation at Thr-423 in response to a conformation change, triggered by interaction with GTP-bound CDC42 or RAC1. Activated by phosphorylation at Thr-423 by BRSK2 and by PDPK1. Phosphorylated by JAK2 in response to PRL; this increases PAK1 kinase activity. Phosphorylated at Ser-21 by PKB/AKT; this reduces interaction with NCK1 and association with focal adhesion sites. Upon DNA damage, phosphorylated at Thr-212 and translocates to the nucleoplasm. Phosphorylated at tyrosine residues, which can be enhanced by NTN1. In terms of tissue distribution, overexpressed in gastric cancer cells and tissues (at protein level).

It is found in the cytoplasm. It localises to the cell junction. Its subcellular location is the focal adhesion. The protein resides in the cell projection. The protein localises to the lamellipodium. It is found in the cell membrane. It localises to the ruffle membrane. Its subcellular location is the invadopodium. The protein resides in the nucleus. The protein localises to the nucleoplasm. It is found in the chromosome. It localises to the cytoskeleton. Its subcellular location is the microtubule organizing center. The protein resides in the centrosome. The catalysed reaction is L-seryl-[protein] + ATP = O-phospho-L-seryl-[protein] + ADP + H(+). It catalyses the reaction L-threonyl-[protein] + ATP = O-phospho-L-threonyl-[protein] + ADP + H(+). Activated by binding small G proteins. Binding of GTP-bound CDC42 or RAC1 to the autoregulatory region releases monomers from the autoinhibited dimer, and enables activation by phosphorylation of Thr-423. Phosphorylation of Thr-84 by OXSR1 inhibits activation. Protein kinase involved in intracellular signaling pathways downstream of integrins and receptor-type kinases that plays an important role in cytoskeleton dynamics, in cell adhesion, migration, proliferation, apoptosis, mitosis, and in vesicle-mediated transport processes. Can directly phosphorylate BAD and protects cells against apoptosis. Activated by interaction with CDC42 and RAC1. Functions as a GTPase effector that links the Rho-related GTPases CDC42 and RAC1 to the JNK MAP kinase pathway. Phosphorylates and activates MAP2K1, and thereby mediates activation of downstream MAP kinases. Involved in the reorganization of the actin cytoskeleton, actin stress fibers and of focal adhesion complexes. Phosphorylates the tubulin chaperone TBCB and thereby plays a role in the regulation of microtubule biogenesis and organization of the tubulin cytoskeleton. Plays a role in the regulation of insulin secretion in response to elevated glucose levels. Part of a ternary complex that contains PAK1, DVL1 and MUSK that is important for MUSK-dependent regulation of AChR clustering during the formation of the neuromuscular junction (NMJ). Activity is inhibited in cells undergoing apoptosis, potentially due to binding of CDC2L1 and CDC2L2. Phosphorylates MYL9/MLC2. Phosphorylates RAF1 at 'Ser-338' and 'Ser-339' resulting in: activation of RAF1, stimulation of RAF1 translocation to mitochondria, phosphorylation of BAD by RAF1, and RAF1 binding to BCL2. Phosphorylates SNAI1 at 'Ser-246' promoting its transcriptional repressor activity by increasing its accumulation in the nucleus. In podocytes, promotes NR3C2 nuclear localization. Required for atypical chemokine receptor ACKR2-induced phosphorylation of LIMK1 and cofilin (CFL1) and for the up-regulation of ACKR2 from endosomal compartment to cell membrane, increasing its efficiency in chemokine uptake and degradation. In synapses, seems to mediate the regulation of F-actin cluster formation performed by SHANK3, maybe through CFL1 phosphorylation and inactivation. Plays a role in RUFY3-mediated facilitating gastric cancer cells migration and invasion. In response to DNA damage, phosphorylates MORC2 which activates its ATPase activity and facilitates chromatin remodeling. In neurons, plays a crucial role in regulating GABA(A) receptor synaptic stability and hence GABAergic inhibitory synaptic transmission through its role in F-actin stabilization. In hippocampal neurons, necessary for the formation of dendritic spines and excitatory synapses; this function is dependent on kinase activity and may be exerted by the regulation of actomyosin contractility through the phosphorylation of myosin II regulatory light chain (MLC). Along with GIT1, positively regulates microtubule nucleation during interphase. Phosphorylates FXR1, promoting its localization to stress granules and activity. Phosphorylates ILK on 'Thr-173' and 'Ser-246', promoting nuclear export of ILK. In Homo sapiens (Human), this protein is Serine/threonine-protein kinase PAK 1.